Reading from the N-terminus, the 348-residue chain is Thioesterase-like protein TwmA (348 aa).

It functions in the pathway secondary metabolite biosynthesis. In terms of biological role, thioesterase-like protein; part of the gene cluster that mediates the biosynthesis of wortmanamides A and B, reduced long-chain polyketides amidated with a specific omega-amino acid, 5-aminopentanoic acid (5PA). The PKS modules of TwmB are involved in the synthesis of the polyketide backbone, whereas the non-canonical C domain of TwmB is a bonafide condensation domain that specifically selects 5PA and catalyzes amidation to release polyketide chain. The C domain clearly prefers C16 and C18 fatty acyl substrates, which is consistent with simultaneous formation of both octaketide and nonaketide acyl amides wortmanamides A and B. Because TwmB lacks a designated enoylreductase (ER) domain, the required activity is provided the enoyl reductase TwmE. The roles of the remaining enzymes have still to be clarified. The sequence is that of Thioesterase-like protein TwmA from Talaromyces wortmannii (Penicillium wortmannii).